The sequence spans 142 residues: Ribosome-binding factor A (142 aa).

Positions 119–142 (ETLGEVQSESDQPTTDETTTVNKT) are disordered. Over residues 123 to 142 (EVQSESDQPTTDETTTVNKT) the composition is skewed to polar residues.

It belongs to the RbfA family. As to quaternary structure, monomer. Binds 30S ribosomal subunits, but not 50S ribosomal subunits or 70S ribosomes.

The protein localises to the cytoplasm. In terms of biological role, one of several proteins that assist in the late maturation steps of the functional core of the 30S ribosomal subunit. Associates with free 30S ribosomal subunits (but not with 30S subunits that are part of 70S ribosomes or polysomes). Required for efficient processing of 16S rRNA. May interact with the 5'-terminal helix region of 16S rRNA. This is Ribosome-binding factor A from Prochlorococcus marinus (strain MIT 9303).